The primary structure comprises 342 residues: S-adenosylmethionine:tRNA ribosyltransferase-isomerase (342 aa).

This sequence belongs to the QueA family. Monomer.

The protein resides in the cytoplasm. The catalysed reaction is 7-aminomethyl-7-carbaguanosine(34) in tRNA + S-adenosyl-L-methionine = epoxyqueuosine(34) in tRNA + adenine + L-methionine + 2 H(+). It functions in the pathway tRNA modification; tRNA-queuosine biosynthesis. Functionally, transfers and isomerizes the ribose moiety from AdoMet to the 7-aminomethyl group of 7-deazaguanine (preQ1-tRNA) to give epoxyqueuosine (oQ-tRNA). The polypeptide is S-adenosylmethionine:tRNA ribosyltransferase-isomerase (Streptococcus pyogenes serotype M1).